Consider the following 121-residue polypeptide: Large ribosomal subunit protein uL14c (121 aa).

Belongs to the universal ribosomal protein uL14 family. Part of the 50S ribosomal subunit.

Its subcellular location is the plastid. It is found in the apicoplast. Functionally, binds to 23S rRNA. This is Large ribosomal subunit protein uL14c (rpl14) from Eimeria tenella (Coccidian parasite).